We begin with the raw amino-acid sequence, 503 residues long: ATP synthase subunit alpha, chloroplastic (503 aa).

170-177 (GDRQTGKT) contributes to the ATP binding site.

This sequence belongs to the ATPase alpha/beta chains family. As to quaternary structure, F-type ATPases have 2 components, CF(1) - the catalytic core - and CF(0) - the membrane proton channel. CF(1) has five subunits: alpha(3), beta(3), gamma(1), delta(1), epsilon(1). CF(0) has four main subunits: a, b, b' and c.

It localises to the plastid. Its subcellular location is the chloroplast thylakoid membrane. The enzyme catalyses ATP + H2O + 4 H(+)(in) = ADP + phosphate + 5 H(+)(out). In terms of biological role, produces ATP from ADP in the presence of a proton gradient across the membrane. The alpha chain is a regulatory subunit. This Gracilaria tenuistipitata var. liui (Red alga) protein is ATP synthase subunit alpha, chloroplastic.